The primary structure comprises 765 residues: Single-minded homolog 1 (765 aa).

Residues 1–53 (MKEKSKNAARTRREKENSEFYELAKLLPLPSAITSQLDKASIIRLTTSYLKMR) enclose the bHLH domain. 2 consecutive PAS domains span residues 77-147 (GREL…QPYH) and 218-288 (PPSA…LVKG). A PAC domain is found at 292-335 (TKYYRFLAKQGGWVWVQSYATIVHNSRSSRPHCIVSVNYVLTDT). The region spanning 336–765 (EYKGLQLSLD…GTSVIITNGS (430 aa)) is the Single-minded C-terminal domain. Composition is skewed to low complexity over residues 352–365 (PTFS…PTIS) and 373–385 (SRLS…SRTS). Disordered stretches follow at residues 352–428 (PTFS…PGSQ) and 527–560 (WDED…PHEP). The Nuclear localization signal motif lies at 368–387 (RKGAKSRLSSSKSKSRTSPY). Positions 394-404 (HTERSESDHDS) are enriched in basic and acidic residues.

Efficient DNA binding requires dimerization with another bHLH protein. Heterodimer; forms a heterodimer with ARNT, ARNT2. As to expression, detected in lung, skeletal muscle and kidney. During fetal development it is found in the CNS, developing kidney, mesodermal and endodermal tissues, including developing somites, mesonephric duct, and foregut.

It is found in the nucleus. Its function is as follows. Transcriptional factor that may have pleiotropic effects during embryogenesis and in the adult. The polypeptide is Single-minded homolog 1 (Sim1) (Mus musculus (Mouse)).